Consider the following 558-residue polypeptide: Glucose-6-phosphate isomerase (558 aa).

Catalysis depends on E362, which acts as the Proton donor. Residues H393 and K523 contribute to the active site.

It belongs to the GPI family.

Its subcellular location is the cytoplasm. It catalyses the reaction alpha-D-glucose 6-phosphate = beta-D-fructose 6-phosphate. The protein operates within carbohydrate degradation; glycolysis; D-glyceraldehyde 3-phosphate and glycerone phosphate from D-glucose: step 2/4. The sequence is that of Glucose-6-phosphate isomerase (Pgi) from Drosophila simulans (Fruit fly).